We begin with the raw amino-acid sequence, 121 residues long: Large ribosomal subunit protein uL14 (121 aa).

It belongs to the universal ribosomal protein uL14 family. In terms of assembly, part of the 50S ribosomal subunit. Forms a cluster with proteins L3 and L19. In the 70S ribosome, L14 and L19 interact and together make contacts with the 16S rRNA in bridges B5 and B8.

Functionally, binds to 23S rRNA. Forms part of two intersubunit bridges in the 70S ribosome. The chain is Large ribosomal subunit protein uL14 from Mycoplasmopsis synoviae (strain 53) (Mycoplasma synoviae).